Reading from the N-terminus, the 589-residue chain is Kelch-like protein 25 (589 aa).

The BTB domain maps to 46–114 (TDVTLWAGDR…AYSSRIAINE (69 aa)). A BACK domain is found at 149–250 (CLGMMLLSDA…LPSDCLQEAV (102 aa)). Kelch repeat units follow at residues 296–340 (TLLI…AIGC), 341–388 (KVYV…ELEN), 389–444 (CLYV…SAKL), 446–492 (LFVF…VLGS), 494–538 (IFIM…ASGN), and 539–585 (KLYV…STWK).

As to quaternary structure, component of the BCR(KLHL25) E3 ubiquitin ligase complex, at least composed of CUL3, KLHL25 and RBX1.

Its pathway is protein modification; protein ubiquitination. Functionally, substrate-specific adapter of a BCR (BTB-CUL3-RBX1) E3 ubiquitin ligase complex involved in various processes, such as translation homeostasis and lipid synthesis. The BCR(KLHL25) ubiquitin ligase complex acts by mediating ubiquitination of hypophosphorylated EIF4EBP1 (4E-BP1): ubiquitination and subsequent degradation of hypophosphorylated EIF4EBP1 (4E-BP1) probably serves as a homeostatic mechanism to maintain translation and prevent eIF4E inhibition when eIF4E levels are low. The BCR(KLHL25) complex does not target EIF4EBP1 (4E-BP1) when it is hyperphosphorylated or associated with eIF4E. The BCR(KLHL25) complex also acts as a regulator of lipid synthesis by mediating ubiquitination and degradation of ACLY, thereby inhibiting lipid synthesis. BCR(KLHL25)-mediated degradation of ACLY promotes fatty acid oxidation and is required for differentiation of inducible regulatory T (iTreg) cells. In Homo sapiens (Human), this protein is Kelch-like protein 25.